The chain runs to 273 residues: Ribosomal RNA small subunit methyltransferase A (273 aa).

6 residues coordinate S-adenosyl-L-methionine: Asn-18, Leu-20, Gly-45, Glu-66, Asp-91, and Asn-113.

This sequence belongs to the class I-like SAM-binding methyltransferase superfamily. rRNA adenine N(6)-methyltransferase family. RsmA subfamily.

It localises to the cytoplasm. It carries out the reaction adenosine(1518)/adenosine(1519) in 16S rRNA + 4 S-adenosyl-L-methionine = N(6)-dimethyladenosine(1518)/N(6)-dimethyladenosine(1519) in 16S rRNA + 4 S-adenosyl-L-homocysteine + 4 H(+). Functionally, specifically dimethylates two adjacent adenosines (A1518 and A1519) in the loop of a conserved hairpin near the 3'-end of 16S rRNA in the 30S particle. May play a critical role in biogenesis of 30S subunits. The protein is Ribosomal RNA small subunit methyltransferase A of Escherichia coli O17:K52:H18 (strain UMN026 / ExPEC).